A 177-amino-acid chain; its full sequence is Protein GrpE (177 aa).

The protein belongs to the GrpE family. Homodimer. Requires K(+) as cofactor.

The protein resides in the cytoplasm. Its function is as follows. Participates actively in the response to hyperosmotic and heat shock by preventing the aggregation of stress-denatured proteins, in association with DnaK and GrpE. It is the nucleotide exchange factor for DnaK and may function as a thermosensor. Unfolded proteins bind initially to DnaJ; upon interaction with the DnaJ-bound protein, DnaK hydrolyzes its bound ATP, resulting in the formation of a stable complex. GrpE releases ADP from DnaK; ATP binding to DnaK triggers the release of the substrate protein, thus completing the reaction cycle. Several rounds of ATP-dependent interactions between DnaJ, DnaK and GrpE are required for fully efficient folding. The sequence is that of Protein GrpE from Thermus thermophilus (strain ATCC 27634 / DSM 579 / HB8).